Reading from the N-terminus, the 3460-residue chain is Reelin (3460 aa).

The first 25 residues, 1-25 (MERSGWARQTFLLALLLGATLRARA), serve as a signal peptide directing secretion. The Reelin domain occupies 26-190 (AAGYYPRFSP…GAPTDVTVHP (165 aa)). A disulfide bridge links cysteine 40 with cysteine 126. A glycan (N-linked (GlcNAc...) asparagine) is linked at asparagine 140. A disulfide bridge links cysteine 154 with cysteine 178. Residues asparagine 257, asparagine 289, and asparagine 305 are each glycosylated (N-linked (GlcNAc...) asparagine). Residues cysteine 539 and cysteine 580 are joined by a disulfide bond. Residues 592–603 (EFSTNHGRSWSL) form a BNR 1 repeat. A disulfide bond links cysteine 608 and cysteine 613. A glycan (N-linked (GlcNAc...) asparagine) is linked at asparagine 628. An EGF-like 1 domain is found at 670–701 (IGPSCLKFCSGRGQCTRHGCKCDPGFSGPACE). 2 disulfide bridges follow: cysteine 674–cysteine 684 and cysteine 691–cysteine 700. The BNR 2 repeat unit spans residues 798-809 (HYSYDNGITWKL). Cysteines 894 and 936 form a disulfide. One copy of the BNR 3 repeat lies at 951–962 (EYSTNHGLTWHL). Disulfide bonds link cysteine 967–cysteine 974, cysteine 1033–cysteine 1043, and cysteine 1050–cysteine 1059. The EGF-like 2 domain maps to 1029–1060 (IGQQCPNMCSGHGSCDHGICRCDQGYQGTECH). A BNR 4 repeat occupies 1156–1167 (QYSNNGGIQWHL). Asparagine 1266 carries an N-linked (GlcNAc...) asparagine glycan. A disulfide bridge links cysteine 1270 with cysteine 1309. A BNR 5 repeat occupies 1322–1333 (QYSHDAGMSWFL). The cysteines at positions 1338 and 1347 are disulfide-linked. One can recognise an EGF-like 3 domain in the interval 1408–1441 (ISEPCPSYCSGHGDCISGVCFCDLGYTAAQGTCV). The stretch at 1534–1545 (QYSNDNGILWHL) is one BNR 6 repeat. An N-linked (GlcNAc...) asparagine glycan is attached at asparagine 1599. Cysteine 1632 and cysteine 1672 form a disulfide bridge. A BNR 7 repeat occupies 1685-1696 (QYSLNNGKDWHL). An intrachain disulfide couples cysteine 1701 to cysteine 1708. N-linked (GlcNAc...) asparagine glycosylation is present at asparagine 1749. The region spanning 1764-1795 (LASGCPWMCSGRGICDAGRCVCDRGFGGPYCV) is the EGF-like 4 domain. The stretch at 1883–1894 (QFSISGGITWHL) is one BNR 8 repeat. A glycan (N-linked (GlcNAc...) asparagine) is linked at asparagine 1920. The BNR 9 repeat unit spans residues 2042-2053 (EFSRDFGATWHL). Positions 2060 and 2073 each coordinate Zn(2+). The EGF-like 5 domain maps to 2128–2160 (IGPQCEEMCNGQGSCINGTKCICDPGYSGPTCK). 3 disulfide bridges follow: cysteine 2132–cysteine 2142, cysteine 2136–cysteine 2148, and cysteine 2150–cysteine 2159. N-linked (GlcNAc...) asparagine glycosylation occurs at asparagine 2144. Glutamate 2178 is a Zn(2+) binding site. The cysteines at positions 2194 and 2234 are disulfide-linked. A BNR 10 repeat occupies 2249–2260 (QYSLNGGLSWSL). Glutamate 2263 serves as a coordination point for Zn(2+). Residues asparagine 2268 and asparagine 2316 are each glycosylated (N-linked (GlcNAc...) asparagine). 3 disulfide bridges follow: cysteine 2347–cysteine 2386, cysteine 2392–cysteine 2558, and cysteine 2543–cysteine 2583. Positions 2396, 2398, and 2459 each coordinate Zn(2+). A BNR 11 repeat occupies 2398–2409 (EYSVDLGLSWHP). The EGF-like 6 domain maps to 2477–2508 (IGDGCIDMCSGHGRCIQGNCVCDEQWGGLYCD). N-linked (GlcNAc...) asparagine glycosylation occurs at asparagine 2568. 2 BNR repeats span residues 2597–2608 (EYSVNGGITWNL) and 2777–2788 (QYSTDFGVSWNY). 5 cysteine pairs are disulfide-bonded: cysteine 2793/cysteine 2800, cysteine 2856/cysteine 2866, cysteine 2860/cysteine 2871, cysteine 2873/cysteine 2882, and cysteine 2918/cysteine 2965. The EGF-like 7 domain occupies 2852 to 2883 (LGPGCLDNCRGHGDCLREQCICDPGYSGPNCY). Asparagine 2961 carries N-linked (GlcNAc...) asparagine glycosylation. Residues 2978 to 2989 (DYSTDGGITWTL) form a BNR 14 repeat. Asparagine 3015 and asparagine 3072 each carry an N-linked (GlcNAc...) asparagine glycan. One copy of the BNR 15 repeat lies at 3142–3154 (EYTKDARSDSWQL). Cysteine 3159 and cysteine 3169 are disulfide-bonded. A glycan (N-linked (GlcNAc...) asparagine) is linked at asparagine 3184. Residues 3227 to 3259 (IGEACPKLCSGHGYCTTGAICICDESFQGDDCS) enclose the EGF-like 8 domain. Intrachain disulfides connect cysteine 3231/cysteine 3241, cysteine 3235/cysteine 3247, cysteine 3249/cysteine 3258, and cysteine 3295/cysteine 3345. Residues 3362–3373 (QYSVNNGITWHV) form a BNR 16 repeat. Asparagine 3411 and asparagine 3438 each carry an N-linked (GlcNAc...) asparagine glycan.

It belongs to the reelin family. Oligomer of disulfide-linked homodimers. Post-translationally, N-glycosylated and to a lesser extent also O-glycosylated. Abundantly produced during brain ontogenesis by the Cajal-Retzius cells and other pioneer neurons located in the telencephalic marginal zone and by granule cells of the external granular layer of the cerebellum. In adult brain, preferentially expressed in GABAergic interneurons of prefrontal cortices, temporal cortex, hippocampus and glutamatergic granule cells of cerebellum. Expression is reduced to about 50% in patients with schizophrenia. Also expressed in fetal and adult liver.

It localises to the secreted. Its subcellular location is the extracellular space. The protein localises to the extracellular matrix. In terms of biological role, extracellular matrix serine protease secreted by pioneer neurons that plays a role in layering of neurons in the cerebral cortex and cerebellum by coordinating cell positioning during neurodevelopment. Regulates microtubule function in neurons and neuronal migration. Binding to the extracellular domains of lipoprotein receptors VLDLR and LRP8/APOER2 induces tyrosine phosphorylation of DAB1 and modulation of TAU phosphorylation. Affects migration of sympathetic preganglionic neurons in the spinal cord, where it seems to act as a barrier to neuronal migration. Enzymatic activity is important for the modulation of cell adhesion. This is Reelin (RELN) from Homo sapiens (Human).